The following is a 146-amino-acid chain: Probable NADH dehydrogenase [ubiquinone] 1 alpha subcomplex subunit 12 (146 aa).

The protein belongs to the complex I NDUFA12 subunit family. In terms of assembly, complex I is composed of 45 different subunits.

It is found in the mitochondrion inner membrane. Its function is as follows. Accessory subunit of the mitochondrial membrane respiratory chain NADH dehydrogenase (Complex I), that is believed not to be involved in catalysis. Complex I functions in the transfer of electrons from NADH to the respiratory chain. The immediate electron acceptor for the enzyme is believed to be ubiquinone. This chain is Probable NADH dehydrogenase [ubiquinone] 1 alpha subcomplex subunit 12, found in Caenorhabditis elegans.